Here is a 228-residue protein sequence, read N- to C-terminus: Cytochrome b6-f complex iron-sulfur subunit 1, chloroplastic (228 aa).

The transit peptide at 1 to 49 (MASSTLSPVTQLCSSKSGLSSVSQCLLVKPMKINSHGLGKDKRMKVKCM) directs the protein to the chloroplast. A helical membrane pass occupies residues 72–92 (LLGALSLPTAGMLVPYGTFFV). Residues 115 to 211 (ASEWLKTHPP…ADIDDGKVVF (97 aa)) enclose the Rieske domain. 4 residues coordinate [2Fe-2S] cluster: Cys157, His159, Cys175, and His178. Cysteines 162 and 177 form a disulfide.

Belongs to the Rieske iron-sulfur protein family. As to quaternary structure, the 4 large subunits of the cytochrome b6-f complex are cytochrome b6, subunit IV (17 kDa polypeptide, petD), cytochrome f and the Rieske protein, while the 4 small subunits are petG, petL, petM and petN. The complex functions as a dimer. The cofactor is [2Fe-2S] cluster.

The protein resides in the plastid. It is found in the chloroplast thylakoid membrane. The catalysed reaction is 2 oxidized [plastocyanin] + a plastoquinol + 2 H(+)(in) = 2 reduced [plastocyanin] + a plastoquinone + 4 H(+)(out). Its function is as follows. Component of the cytochrome b6-f complex, which mediates electron transfer between photosystem II (PSII) and photosystem I (PSI), cyclic electron flow around PSI, and state transitions. The sequence is that of Cytochrome b6-f complex iron-sulfur subunit 1, chloroplastic (petC1) from Nicotiana tabacum (Common tobacco).